The primary structure comprises 379 residues: Mannitol-1-phosphate 5-dehydrogenase (379 aa).

3 to 14 (ALHFGAGNIGRG) is an NAD(+) binding site.

It belongs to the mannitol dehydrogenase family.

It catalyses the reaction D-mannitol 1-phosphate + NAD(+) = beta-D-fructose 6-phosphate + NADH + H(+). This chain is Mannitol-1-phosphate 5-dehydrogenase, found in Actinobacillus pleuropneumoniae serotype 5b (strain L20).